Here is a 472-residue protein sequence, read N- to C-terminus: RING-H2 finger protein ATL13 (472 aa).

A helical membrane pass occupies residues 51 to 71 (ILLIIIILSIIFFISGLLHLL). An RING-type; atypical zinc finger spans residues 134 to 176 (CAVCLCEFETEDKLRLLPKCSHAFHMDCIDTWLLSHSTCPLCR). Positions 320–340 (VSTKKQSSKNRGLPGHRTAMS) are disordered.

It belongs to the RING-type zinc finger family. ATL subfamily.

Its subcellular location is the membrane. The catalysed reaction is S-ubiquitinyl-[E2 ubiquitin-conjugating enzyme]-L-cysteine + [acceptor protein]-L-lysine = [E2 ubiquitin-conjugating enzyme]-L-cysteine + N(6)-ubiquitinyl-[acceptor protein]-L-lysine.. Its pathway is protein modification; protein ubiquitination. This is RING-H2 finger protein ATL13 (ATL13) from Arabidopsis thaliana (Mouse-ear cress).